The chain runs to 209 residues: T-cell surface glycoprotein CD8 beta chain (209 aa).

The N-terminal stretch at 1–21 (MRPRMWLLLSAQLAALHGNSV) is a signal peptide. In terms of domain architecture, Ig-like V-type spans 22–131 (LQQTPAYIMV…TLIFGTGTQL (110 aa)). Residues 22-169 (LQQTPAYIMV…ETRKGPLCSP (148 aa)) lie on the Extracellular side of the membrane. Residues Cys-41 and Cys-115 are joined by a disulfide bond. N-linked (GlcNAc...) asparagine glycosylation is present at Asn-101. The chain crosses the membrane as a helical span at residues 170–190 (ITLSLLVAGILVLLVSLGVAI). Residues 191 to 209 (HLYCRQRRARLRFMKQFYK) lie on the Cytoplasmic side of the membrane.

In terms of assembly, forms disulfide-linked heterodimers with CD8A at the cell surface. Interacts with CD3D; this interaction couples TCR-CD3 with CD8. Interacts with LCK. In terms of processing, phosphorylated as a consequence of T-cell activation. Palmitoylated at the cytoplasmic tail and thereby targets the heterodimer CD8A/CD8B to lipid rafts unlike CD8A homodimers.

It localises to the cell membrane. Functionally, integral membrane glycoprotein that plays an essential role in the immune response and serves multiple functions in responses against both external and internal offenses. In T-cells, functions primarily as a coreceptor for MHC class I molecule:peptide complex. The antigens presented by class I peptides are derived from cytosolic proteins while class II derived from extracellular proteins. Interacts simultaneously with the T-cell receptor (TCR) and the MHC class I proteins presented by antigen presenting cells (APCs). In turn, recruits the Src kinase LCK to the vicinity of the TCR-CD3 complex. A palmitoylation site in the cytoplasmic tail of CD8B chain contributes to partitioning of CD8 into the plasma membrane lipid rafts where signaling proteins are enriched. Once LCK recruited, it initiates different intracellular signaling pathways by phosphorylating various substrates ultimately leading to lymphokine production, motility, adhesion and activation of cytotoxic T-lymphocytes (CTLs). Additionally, plays a critical role in thymic selection of CD8+ T-cells. The polypeptide is T-cell surface glycoprotein CD8 beta chain (CD8B) (Saimiri sciureus (Common squirrel monkey)).